We begin with the raw amino-acid sequence, 339 residues long: Uroporphyrinogen decarboxylase (339 aa).

Substrate is bound by residues 23–27 (RQAGR), aspartate 72, tyrosine 147, serine 202, and histidine 315.

Belongs to the uroporphyrinogen decarboxylase family. In terms of assembly, homodimer.

The protein resides in the cytoplasm. It carries out the reaction uroporphyrinogen III + 4 H(+) = coproporphyrinogen III + 4 CO2. It functions in the pathway porphyrin-containing compound metabolism; protoporphyrin-IX biosynthesis; coproporphyrinogen-III from 5-aminolevulinate: step 4/4. Its function is as follows. Catalyzes the decarboxylation of four acetate groups of uroporphyrinogen-III to yield coproporphyrinogen-III. In Desulfotalea psychrophila (strain LSv54 / DSM 12343), this protein is Uroporphyrinogen decarboxylase.